Here is a 369-residue protein sequence, read N- to C-terminus: Uroporphyrinogen decarboxylase (369 aa).

Substrate-binding positions include R36 to R40, D86, Y162, S217, and H342.

It belongs to the uroporphyrinogen decarboxylase family. Homodimer.

The protein resides in the cytoplasm. The enzyme catalyses uroporphyrinogen III + 4 H(+) = coproporphyrinogen III + 4 CO2. The protein operates within porphyrin-containing compound metabolism; protoporphyrin-IX biosynthesis; coproporphyrinogen-III from 5-aminolevulinate: step 4/4. Functionally, catalyzes the decarboxylation of four acetate groups of uroporphyrinogen-III to yield coproporphyrinogen-III. This chain is Uroporphyrinogen decarboxylase, found in Albidiferax ferrireducens (strain ATCC BAA-621 / DSM 15236 / T118) (Rhodoferax ferrireducens).